A 639-amino-acid chain; its full sequence is Chaperone protein HtpG (639 aa).

The a; substrate-binding stretch occupies residues 1–343 (MEATATKEHL…SNDLPLNVSR (343 aa)). Residues 344–564 (EILQESKDIE…THDMSGNLER (221 aa)) form a b region. A c region spans residues 565 to 639 (LLKSAGQKVT…QLFLSTGSKE (75 aa)).

Belongs to the heat shock protein 90 family. Homodimer.

The protein localises to the cytoplasm. Molecular chaperone. Has ATPase activity. The protein is Chaperone protein HtpG of Nitrosospira multiformis (strain ATCC 25196 / NCIMB 11849 / C 71).